The sequence spans 396 residues: Elongation factor Tu (396 aa).

The 197-residue stretch at 10 to 206 (KPHVNVGTIG…ALDTYIPLPE (197 aa)) folds into the tr-type G domain. The tract at residues 19–26 (GHVDHGKT) is G1. 19–26 (GHVDHGKT) serves as a coordination point for GTP. Position 26 (threonine 26) interacts with Mg(2+). The G2 stretch occupies residues 60 to 64 (GITIN). Positions 81 to 84 (DCPG) are G3. GTP contacts are provided by residues 81 to 85 (DCPGH) and 136 to 139 (NKCD). Residues 136–139 (NKCD) are G4. A G5 region spans residues 174–176 (SAK).

Belongs to the TRAFAC class translation factor GTPase superfamily. Classic translation factor GTPase family. EF-Tu/EF-1A subfamily. In terms of assembly, monomer.

The protein localises to the cytoplasm. The catalysed reaction is GTP + H2O = GDP + phosphate + H(+). GTP hydrolase that promotes the GTP-dependent binding of aminoacyl-tRNA to the A-site of ribosomes during protein biosynthesis. This chain is Elongation factor Tu, found in Polaromonas sp. (strain JS666 / ATCC BAA-500).